The sequence spans 503 residues: MVTHVLAIDQGTTSSRAILFRADTSIAAIAQQEFPQHFPASGWVEHEPEDIWTSTVATCREAMNKAGVTPKDIAAIGITNQRETTVVWDRATGQAMHRAVVWQDRRTADICARLKAEGHEPAISAKTGLIVDPYFSGTKIAWILDSVPGARARASRGDLLFGTVDCYLLWRLTGGKVHATDATNASRTLLFDIHTGQWDEELLKILRVPRAMLPEVKDSSAHFGDSVADLFGAPISIRGIAGDQQAAVVGQACFAPGMIKSTYGTGCFALLNTGATPVASKNKLLTTIAYQLNGKRTYALEGSIFVAGSAVQWLRDGLGLIKQASETGPLADRSDATQSVYLVPAFVGMGAPYWNPNVRGALFGLTRNTGPAELAHAALESVCYQTFDLWAAMRADWPDAAAAHTVLRVDGGMTASDWTMQRLADLLDAPVDRPVIQETTALGAAYLAGLSAGVYPEPSKFADNWRLERRFKPAMSAATRTRKLKGWAAAVRGVLASDGGEGR.

ADP is bound at residue Thr-12. ATP is bound by residues Thr-12, Thr-13, and Ser-14. Residue Thr-12 participates in sn-glycerol 3-phosphate binding. Arg-16 lines the ADP pocket. 4 residues coordinate sn-glycerol 3-phosphate: Arg-82, Glu-83, Tyr-134, and Asp-243. Positions 82, 83, 134, 243, and 244 each coordinate glycerol. 2 residues coordinate ADP: Thr-265 and Gly-308. ATP contacts are provided by Thr-265, Gly-308, Gln-312, and Gly-412. ADP is bound at residue Gly-412.

It belongs to the FGGY kinase family.

It carries out the reaction glycerol + ATP = sn-glycerol 3-phosphate + ADP + H(+). The protein operates within polyol metabolism; glycerol degradation via glycerol kinase pathway; sn-glycerol 3-phosphate from glycerol: step 1/1. With respect to regulation, inhibited by fructose 1,6-bisphosphate (FBP). In terms of biological role, key enzyme in the regulation of glycerol uptake and metabolism. Catalyzes the phosphorylation of glycerol to yield sn-glycerol 3-phosphate. The sequence is that of Glycerol kinase from Nitrobacter hamburgensis (strain DSM 10229 / NCIMB 13809 / X14).